The chain runs to 382 residues: MKALHFGAGNIGRGFIGKLLADAGIQLTFADVNQVVLDALNARHSYQVHVVGENEQVDTVSGVNAVSSIGDDVVDLIAHVDLITTAVGPVVLERIAPAIAKGLAKRKAQGVDAPLNIIACENMVRGTTQLKGHVMNALADGDKAWVEQHVGFVDSAVDRIVPPSASATHDPLEVTVETFSEWIVDKTQFKGALPNIPGMELTDNLMAFVERKLFTLNTGHAITAYLGKLAGHQTIRDAILDESIRAVVKGAMEESGAVLIKRYGFDADKHAAYIQKILGRFENPYLKDDVERVGRQPLRKLSAGDRLIKPLLGTLEYGLPHVNLVKGIAAAMHFRSDEDPQAQELAALITEKGPQAALAQISGLDANSDVVAEAVNAYNATK.

3–14 (ALHFGAGNIGRG) provides a ligand contact to NAD(+).

The protein belongs to the mannitol dehydrogenase family.

The enzyme catalyses D-mannitol 1-phosphate + NAD(+) = beta-D-fructose 6-phosphate + NADH + H(+). In Salmonella enteritidis PT4 (strain P125109), this protein is Mannitol-1-phosphate 5-dehydrogenase.